The chain runs to 393 residues: tRNA(Met) cytidine acetate ligase (393 aa).

ATP-binding residues include Gly-81, Asn-142, and Arg-167.

It belongs to the TmcAL family.

It localises to the cytoplasm. The catalysed reaction is cytidine(34) in elongator tRNA(Met) + acetate + ATP = N(4)-acetylcytidine(34) in elongator tRNA(Met) + AMP + diphosphate. In terms of biological role, catalyzes the formation of N(4)-acetylcytidine (ac(4)C) at the wobble position of elongator tRNA(Met), using acetate and ATP as substrates. First activates an acetate ion to form acetyladenylate (Ac-AMP) and then transfers the acetyl group to tRNA to form ac(4)C34. The protein is tRNA(Met) cytidine acetate ligase of Bacillus cytotoxicus (strain DSM 22905 / CIP 110041 / 391-98 / NVH 391-98).